The sequence spans 121 residues: Histone H2B.6 (121 aa).

The tract at residues 1–28 (MAPKAEKKPKVEKRVPGKEGETSKKKAK) is disordered. An N6-acetyllysine mark is found at Lys7 and Lys13.

Belongs to the histone H2B family. In terms of assembly, the nucleosome is a histone octamer containing two molecules each of H2A, H2B, H3 and H4 assembled in one H3-H4 heterotetramer and two H2A-H2B heterodimers. The octamer wraps approximately 147 bp of DNA. Can be acetylated to form H2BK6ac and H2BK33ac. In terms of tissue distribution, expressed preferentially in meristematic tissues.

The protein localises to the nucleus. It is found in the chromosome. Its function is as follows. Core component of nucleosome. Nucleosomes wrap and compact DNA into chromatin, limiting DNA accessibility to the cellular machineries which require DNA as a template. Histones thereby play a central role in transcription regulation, DNA repair, DNA replication and chromosomal stability. DNA accessibility is regulated via a complex set of post-translational modifications of histones, also called histone code, and nucleosome remodeling. This Triticum aestivum (Wheat) protein is Histone H2B.6 (TH123).